The following is a 555-amino-acid chain: Lysine--tRNA ligase (555 aa).

A 'HIGH' region motif is present at residues 37–45 (TSGRLHVGN). Residues 301–305 (AMSSS) carry the 'KMSKS' region motif.

This sequence belongs to the class-I aminoacyl-tRNA synthetase family.

Its subcellular location is the cytoplasm. It carries out the reaction tRNA(Lys) + L-lysine + ATP = L-lysyl-tRNA(Lys) + AMP + diphosphate. The protein is Lysine--tRNA ligase of Methanopyrus kandleri (strain AV19 / DSM 6324 / JCM 9639 / NBRC 100938).